Reading from the N-terminus, the 21-residue chain is Glutathione S-transferase 1 (21 aa).

This sequence belongs to the GST superfamily. Phi family.

It carries out the reaction RX + glutathione = an S-substituted glutathione + a halide anion + H(+). In terms of biological role, conjugation of reduced glutathione to a wide number of exogenous and endogenous hydrophobic electrophiles. In plants, may have a detoxification role against certain herbicides. The polypeptide is Glutathione S-transferase 1 (Populus euphratica (Euphrates poplar)).